Here is a 214-residue protein sequence, read N- to C-terminus: Adenylate kinase (214 aa).

An ATP-binding site is contributed by 10–15 (GAGKGT). The tract at residues 30-59 (STGDMFRAAIKAGTELGKQAKALMDEGKLV) is NMP. AMP-binding positions include Thr-31, Arg-36, 57–59 (KLV), 85–88 (GFPR), and Gln-92. The tract at residues 122 to 159 (GRRVHQASGRSYHIVYNPPKVEGKDDVTGEDLIIRADD) is LID. ATP is bound by residues Arg-123 and 132 to 133 (SY). 2 residues coordinate AMP: Arg-156 and Arg-167. Gln-200 contacts ATP.

Belongs to the adenylate kinase family. As to quaternary structure, monomer.

The protein localises to the cytoplasm. It catalyses the reaction AMP + ATP = 2 ADP. It functions in the pathway purine metabolism; AMP biosynthesis via salvage pathway; AMP from ADP: step 1/1. Its function is as follows. Catalyzes the reversible transfer of the terminal phosphate group between ATP and AMP. Plays an important role in cellular energy homeostasis and in adenine nucleotide metabolism. It may be linked to the biosynthesis of lipopolysaccharide surface molecules, which are important for the pathogenesis of H.influenzae. The protein is Adenylate kinase of Haemophilus influenzae (strain ATCC 51907 / DSM 11121 / KW20 / Rd).